The sequence spans 361 residues: D-malate dehydrogenase [decarboxylating] (361 aa).

Mn(2+) is bound by residues D224, D248, and D252.

Belongs to the isocitrate and isopropylmalate dehydrogenases family. Mg(2+) is required as a cofactor. Requires Mn(2+) as cofactor.

The protein localises to the cytoplasm. The catalysed reaction is (R)-malate + NAD(+) = pyruvate + CO2 + NADH. Catalyzes the NAD(+)-dependent oxidative decarboxylation of D-malate into pyruvate. Is essential for aerobic growth on D-malate as the sole carbon source. But is not required for anaerobic D-malate utilization, although DmlA is expressed and active in those conditions. Appears to be not able to use L-tartrate as a substrate for dehydrogenation instead of D-malate. This is D-malate dehydrogenase [decarboxylating] (dmlA) from Escherichia coli (strain K12).